We begin with the raw amino-acid sequence, 365 residues long: Phosphatidylcholine:ceramide cholinephosphotransferase 2 (365 aa).

The interval 9–50 (LEGHLESQTNDSTNTYTSPTEAVEEEGKNGKGKPKTLSNGLR) is disordered. Residues 14 to 28 (ESQTNDSTNTYTSPT) show a composition bias toward polar residues. Helical transmembrane passes span 80-100 (GIAFVYALFNLILTTVMITVV), 128-148 (FSVSEINGMVLVGLWITQWLF), 159-179 (FFFIMGTLYLYRCITMYVTTL), 219-239 (ILCGDFLFSGHTVVLTLTYLF), and 248-268 (FWWYHLVCWLLSAAGIICILV). The active site involves His229. Catalysis depends on residues His272 and Asp276. A helical transmembrane segment spans residues 273-290 (YTVDVIIAYYITTRLFWW). Residues 291 to 365 (YHSMANEKNL…KIGEDNEKST (75 aa)) are Cytoplasmic-facing. S-palmitoyl cysteine attachment occurs at residues Cys331, Cys332, Cys343, and Cys348.

The protein belongs to the sphingomyelin synthase family. Post-translationally, palmitoylated on Cys-331, Cys-332, Cys-343 and Cys-348; which plays an important role in plasma membrane localization. In terms of tissue distribution, highest expression is detected in cortical bone, followed by vertebrae, kidney and liver. Expression levels are very low in spleen, muscle, heart, brown fat and thymus. Expressed in macrophages.

It is found in the cell membrane. The protein localises to the golgi apparatus membrane. The catalysed reaction is an N-acylsphing-4-enine + a 1,2-diacyl-sn-glycero-3-phosphocholine = a sphingomyelin + a 1,2-diacyl-sn-glycerol. It catalyses the reaction an N-acylsphinganine + a 1,2-diacyl-sn-glycero-3-phosphocholine = an N-acylsphinganine-1-phosphocholine + a 1,2-diacyl-sn-glycerol. The enzyme catalyses an N-acyl-(4R)-4-hydroxysphinganine + a 1,2-diacyl-sn-glycero-3-phosphocholine = an N-acyl-(4R)-4-hydroxysphinganine-phosphocholine + a 1,2-diacyl-sn-glycerol. It carries out the reaction an N-acylsphing-4-enine + a 1,2-diacyl-sn-glycero-3-phosphoethanolamine = an N-acylsphing-4-enine 1-phosphoethanolamine + a 1,2-diacyl-sn-glycerol. The catalysed reaction is an N-acylsphinganine + a 1,2-diacyl-sn-glycero-3-phosphoethanolamine = an N-acylsphinganine-1-phosphoethanolamine + a 1,2-diacyl-sn-glycerol. It catalyses the reaction an N-acyl-(4R)-4-hydroxysphinganine + a 1,2-diacyl-sn-glycero-3-phosphoethanolamine = an N-acyl-(4R)-4-hydroxysphinganine-1-phosphoethanolamine + a 1,2-diacyl-sn-glycerol. The enzyme catalyses 1,2-dihexadecanoyl-sn-glycero-3-phosphocholine + an N-acylsphing-4-enine = 1,2-dihexadecanoyl-sn-glycerol + a sphingomyelin. It carries out the reaction 1-(9Z-octadecenoyl)-2-acyl-sn-3-glycerol + a sphingomyelin = a 1-(9Z-octadecenoyl)-2-acyl-sn-glycero-3-phosphocholine + an N-acylsphing-4-enine. The catalysed reaction is N-hexadecanoylsphinganine + a 1,2-diacyl-sn-glycero-3-phosphocholine = N-hexadecanoyl-sphinganine-1-phosphocholine + a 1,2-diacyl-sn-glycerol. It catalyses the reaction N-hexadecanoyl-(4R)-hydroxysphinganine + a 1,2-diacyl-sn-glycero-3-phosphocholine = N-hexadecanoyl-(4R)-hydroxysphinganine-phosphocholine + a 1,2-diacyl-sn-glycerol. The enzyme catalyses N-hexadecanoylsphinganine + a 1,2-diacyl-sn-glycero-3-phosphoethanolamine = N-hexadecanoyl-sphinganine-1-phosphoethanolamine + a 1,2-diacyl-sn-glycerol. It carries out the reaction N-hexadecanoyl-(4R)-hydroxysphinganine + a 1,2-diacyl-sn-glycero-3-phosphoethanolamine = N-hexadecanoyl-(4R)-hydroxysphinganine-1-phosphoethanolamine + a 1,2-diacyl-sn-glycerol. It functions in the pathway sphingolipid metabolism. Functionally, sphingomyelin synthase that primarily contributes to sphingomyelin synthesis and homeostasis at the plasma membrane. Catalyzes the reversible transfer of phosphocholine moiety in sphingomyelin biosynthesis: in the forward reaction transfers phosphocholine head group of phosphatidylcholine (PC) on to ceramide (CER) to form ceramide phosphocholine (sphingomyelin, SM) and diacylglycerol (DAG) as by-product, and in the reverse reaction transfers phosphocholine from SM to DAG to form PC and CER. The direction of the reaction appears to depend on the levels of CER and DAG in the plasma membrane. Does not use free phosphorylcholine or CDP-choline as donors. Can also transfer phosphoethanolamine head group of phosphatidylethanolamine (PE) on to ceramide (CER) to form ceramide phosphoethanolamine (CPE). Regulates receptor-mediated signal transduction via mitogenic DAG and proapoptotic CER, as well as via SM, a structural component of membrane rafts that serve as platforms for signal transduction and protein sorting. To a lesser extent, plays a role in secretory transport via regulation of DAG pool at the Golgi apparatus and its downstream effects on PRKD1. Required for normal bone matrix mineralization. The protein is Phosphatidylcholine:ceramide cholinephosphotransferase 2 (Sgms2) of Mus musculus (Mouse).